The primary structure comprises 1439 residues: MVSKRKLSKIDAAEESSKTDLQSRCPETKRSRISDKRAPSQGGLENEGVFEELLRTSGIILKVGEGQNEIAVDQTAFQKKLRVALEKHPSYPGVVNEFISGLESHIKDRSQFKNCLLPCTPARTEGSRTLVHSYCESLIKLLLGIKILQPAVVTLLLEKIPEFFFDVVGTFGTNFPRLIVNQFKWLDGLLDSQDLVKKLMQMLSVSPVPIQHDIITSLPEILEDSQQNEVARELSCLLKQGRRLTVPILDALSRLDLDAELLAEVRQSAMTIVPSVKLEDLPVVIKFILHNVKAADAVEVISDLRKSLDLSSCVLPLQLLGSQRKLKSQAQASSSMSQVTTSQNCVKLLFDVIKQAVRFQKDVSEAWIKAIENSTSVSDHKVLDLIVLLLIHSTNSKNRKQTEKVLRSKIRLGCMPEQLMQNAFQNHSMVIKDFFPSILSLAQTFLHSAHPAVVSFGSCMYKQAFAVFDSYCQQEVVCALVTHVCSGNETELDISLDVLTDLVILHPSLLLRYATFVKTILDSMQKLNPCQIRKLFYILSTLAFSQRQEGSYIQDDMHMVIRKWLSSSVPNHKQMGIIGAVTMMGSVALKRNEADGGLLERPELSIECDGQLSTLLDLVGFCCEQTPEVLALYYDELANLIEKQKGNLDLQLLDKFGKSLVEDFPNDFVVDLSPTVDGSFLFPVKSLYNLDEDETQGAIAINLLPLVSQSEPGRVADEMSNSRKRVVSPICLSPCFRLLRLYTGEQNNGSLEEIDALLGCPLYLTDLEVEGKLDSLSKQEREFLCSLLFYALNWFREVVNAFCQQQDAEMKGKVLTRLQNITELQNVLGKCLAATPGYVPPPATFDSEAPEGVPSINAGGPVRKKNGKKRKSDSSKACSAERTQADESSDGNQPDTELSELEKSATEKETGNPLAQLQSYRPYFRELDLEVFSVLHCGLLTKSILDTEMHTEASEVVQLGPAELCFLLDDMCWKLEHVLTPGSTRRVPFLKERGNKDVGFSHLCQRSPKEVAVCVVKLLKPLCNHMENMHNYFQTVIPNQGVVDESGLNIQEYQLMSSCYHQLLLAFRLLFAWSGFSQHENSNLLRSALQVLADRLKPGETEFLPLEELISESFQYLLNFQASIPSFQCAFILTQVLMAISEKPMTGWKREKMASLAKQFLCQSWMKPGGDREKGSHFNSALHTLLCVYLEHTDNILKAIEEISSVGVPELINSAKDGCSSTYPTLSRQTFPVFFRVMMAQLESSVKSIPAGKPSDSGEVQLEKLLKWNIAVRNFHILINLVKVFDSRPVLSICLKYGRLFVEAFLKLAMPLLDHSFKKHRDDVQSLLKTLQLSTRQLHHMCGHSKIHQDLGLTNHVPLLKKSLEQFVYRVKAMLAFNHCQEAFWVGVLKNRDLQGEEILSQASAAPEEDSAEGSEEDTADSAAEEPDGTDSDSGGAGR.

Lys563 participates in a covalent cross-link: Glycyl lysine isopeptide (Lys-Gly) (interchain with G-Cter in ubiquitin).

The protein belongs to the Fanconi anemia protein FANCD2 family. As to quaternary structure, homodimer; cannot be ubiquitinated and does not bind DNA. Part of a FANCI-FANCD2 heterodimeric complex that binds and scans dsDNA for DNA damage. Interacts directly with FANCE and FANCI. Interacts with USP1 and MEN1. The ubiquitinated form specifically interacts with BRCA1 and BLM. Both the nonubiquitinated and the monoubiquitinated forms interact with BRCA2; this interaction is mediated by phosphorylated FANCG and the complex also includes XCCR3. The ubiquitinated form specifically interacts with MTMR15/FAN1 (via UBZ-type zinc finger), leading to recruit MTMR15/FAN1 to sites of DNA damage. Interacts with DCLRE1B/Apollo. Interacts with POLN. Interacts with UHRF1 and UHRF2; these interactions promote FANCD2 activation. Post-translationally, monoubiquitinated on Lys-563 during S phase and upon genotoxic stress. Deubiquitinated by USP1 as cells enter G2/M, or once DNA repair is completed. Monoubiquitination prevents DNA release from the FANCI-FANCD2 complex. FANCD2 is only ubiquitinated in the FANCI-FANCD2 complex and the monoubiquitination of FANCD2 is promoted by phosphorylation of FANCI. In terms of processing, phosphorylated in response to various genotoxic stresses by ATM and/or ATR.

It localises to the nucleus. Its function is as follows. Required for maintenance of chromosomal stability. Promotes accurate and efficient pairing of homologs during meiosis. Involved in the repair of DNA double-strand breaks, both by homologous recombination and single-strand annealing. The FANCI-FANCD2 complex binds and scans double-stranded DNA (dsDNA) for DNA damage; this complex stalls at DNA junctions between double-stranded DNA and single-stranded DNA. May participate in S phase and G2 phase checkpoint activation upon DNA damage. Plays a role in preventing breakage and loss of missegregating chromatin at the end of cell division, particularly after replication stress. Required for the targeting, or stabilization, of BLM to non-centromeric abnormal structures induced by replicative stress. Promotes BRCA2/FANCD1 loading onto damaged chromatin. May also be involved in B-cell immunoglobulin isotype switching. The sequence is that of Fanconi anemia group D2 protein from Gallus gallus (Chicken).